The following is a 49-amino-acid chain: Small, acid-soluble spore protein O (49 aa).

The tract at residues 1 to 49 is disordered; the sequence is MVKRKANHVIPGMNDASAQGKGAGYNEELSNEPLTEAQKQNNKKRKKNQ.

The protein belongs to the SspO family.

It is found in the spore core. This is Small, acid-soluble spore protein O from Anoxybacillus flavithermus (strain DSM 21510 / WK1).